A 253-amino-acid polypeptide reads, in one-letter code: 3-deoxy-manno-octulosonate cytidylyltransferase (253 aa).

Belongs to the KdsB family.

The protein localises to the cytoplasm. It carries out the reaction 3-deoxy-alpha-D-manno-oct-2-ulosonate + CTP = CMP-3-deoxy-beta-D-manno-octulosonate + diphosphate. It functions in the pathway nucleotide-sugar biosynthesis; CMP-3-deoxy-D-manno-octulosonate biosynthesis; CMP-3-deoxy-D-manno-octulosonate from 3-deoxy-D-manno-octulosonate and CTP: step 1/1. It participates in bacterial outer membrane biogenesis; lipopolysaccharide biosynthesis. Functionally, activates KDO (a required 8-carbon sugar) for incorporation into bacterial lipopolysaccharide in Gram-negative bacteria. The sequence is that of 3-deoxy-manno-octulosonate cytidylyltransferase from Neisseria meningitidis serogroup B (strain ATCC BAA-335 / MC58).